Consider the following 306-residue polypeptide: Putative HTH-type transcriptional regulatory protein Mhun_2548 (306 aa).

The HTH cro/C1-type domain occupies 132–189; that stretch reads LRELRETRSLSLGDLGQILGVSRRTVAKYEAGMGTTIEIALRIEETFDSGVIEPIDLI. Residues 143–162 constitute a DNA-binding region (H-T-H motif); the sequence is LGDLGQILGVSRRTVAKYEA.

This is Putative HTH-type transcriptional regulatory protein Mhun_2548 from Methanospirillum hungatei JF-1 (strain ATCC 27890 / DSM 864 / NBRC 100397 / JF-1).